Consider the following 69-residue polypeptide: UPF0337 protein YjbJ (69 aa).

The protein belongs to the UPF0337 (CsbD) family.

The sequence is that of UPF0337 protein YjbJ (yjbJ) from Escherichia coli O157:H7.